A 421-amino-acid polypeptide reads, in one-letter code: Putative B3 domain-containing protein Os08g0333500 (421 aa).

Residues 1-51 (MTVELEKIAGSFFISKGWKTFVHRTGLLSGQYIRFQVLTPSKINVLLFDKK) constitute a DNA-binding region (TF-B3). The disordered stretch occupies residues 92–121 (SHTSNKETSSDSRTESMTDIPSSSDNSGET). The segment covering 95–107 (SNKETSSDSRTES) has biased composition (basic and acidic residues). Residues 108–121 (MTDIPSSSDNSGET) show a composition bias toward polar residues.

Its subcellular location is the nucleus. The protein is Putative B3 domain-containing protein Os08g0333500 of Oryza sativa subsp. japonica (Rice).